The chain runs to 60 residues: MSQKTVKVQLVRSLIGTREDHRATVRGLGLRRMNSVSELQDTPAVRGMINKVSYLVKVIG.

This sequence belongs to the universal ribosomal protein uL30 family. As to quaternary structure, part of the 50S ribosomal subunit.

The chain is Large ribosomal subunit protein uL30 from Ralstonia pickettii (strain 12J).